Here is a 105-residue protein sequence, read N- to C-terminus: V-type ATP synthase subunit F (105 aa).

This sequence belongs to the V-ATPase F subunit family.

Functionally, produces ATP from ADP in the presence of a proton gradient across the membrane. The chain is V-type ATP synthase subunit F from Fusobacterium nucleatum subsp. nucleatum (strain ATCC 25586 / DSM 15643 / BCRC 10681 / CIP 101130 / JCM 8532 / KCTC 2640 / LMG 13131 / VPI 4355).